The sequence spans 109 residues: Serine protease inhibitor (109 aa).

Positions 1 to 28 are cleaved as a signal peptide; it reads MKMKLLQVHFVLLVSSSFLLGYTGMVTA. 5 disulfide bridges follow: Cys43/Cys83, Cys52/Cys79, Cys58/Cys73, Cys62/Cys104, and Cys85/Cys98. The region spanning 43 to 104 is the TIL domain; sequence CRENEIFSQC…QGVCILENSC (62 aa).

It belongs to the serine protease inhibitor-like (TIL domain-containing) family. Ubiquitously expressed (at protein level), including in venom glands. Found more precisely in the epidermis, fat body, gut, muscle, and venom of worker bees.

The protein resides in the secreted. In terms of biological role, dual role peptide that functions as a broad-spectrum antimicrobial peptide and antifibrinolytic toxin. Inhibits trypsin (IC(50)=375 nM), plasmin (IC(50)=2140 nM), and microbial serine proteases (subtilisin A (IC(50)=294 nM) and proteinase K (IC(50)=459 nM)). Exhibits antifibrinolytic activity by binding and inhibiting plasmin. Does not inhibit chymotrypsin, elastase or thrombin. Binds to microbial cell wall carbohydrates (LPS, mannan and N-acetyl-D-glucosamine) and shows antimicrobial activity (MIC=4.1 uM against B.thuringiensis, MIC=4.95 uM against E.coli, MIC=9.6 uM against the fungus B.bassiana). Does not show hemolytic activity. This is Serine protease inhibitor from Bombus ignitus (Bumblebee).